A 350-amino-acid polypeptide reads, in one-letter code: Ribosomal RNA small subunit methyltransferase C (350 aa).

It belongs to the methyltransferase superfamily. RsmC family. In terms of assembly, monomer.

The protein resides in the cytoplasm. The enzyme catalyses guanosine(1207) in 16S rRNA + S-adenosyl-L-methionine = N(2)-methylguanosine(1207) in 16S rRNA + S-adenosyl-L-homocysteine + H(+). Its function is as follows. Specifically methylates the guanine in position 1207 of 16S rRNA in the 30S particle. In Sodalis glossinidius (strain morsitans), this protein is Ribosomal RNA small subunit methyltransferase C.